The following is a 430-amino-acid chain: Isocitrate dehydrogenase [NADP], mitochondrial (430 aa).

Residues 1-27 (MIRASAIQRTAMLLRQLRGFSTSATLA) constitute a mitochondrion transit peptide. Residues 101–103 (TIT) and Arg-108 each bind NADP(+). Residue Thr-103 coordinates substrate. Residues 120–126 (SPNGTIR), Arg-135, and Arg-158 each bind substrate. Asp-277 lines the Mn(2+) pocket. Lys-285 provides a ligand contact to NADP(+). Asp-300 is a Mn(2+) binding site. NADP(+) contacts are provided by residues 335–340 (GTVTRH) and Asn-353.

The protein belongs to the isocitrate and isopropylmalate dehydrogenases family. Homodimer. Mg(2+) is required as a cofactor. It depends on Mn(2+) as a cofactor.

The protein localises to the mitochondrion. It catalyses the reaction D-threo-isocitrate + NADP(+) = 2-oxoglutarate + CO2 + NADPH. In terms of biological role, mitochondrial IDP1 may regulate flux through the tricarboxylic acid cycle and respiration. Its probably critical function is the production of NADPH. This Candida tropicalis (Yeast) protein is Isocitrate dehydrogenase [NADP], mitochondrial (IDP1).